A 618-amino-acid chain; its full sequence is uncharacterized protein (618 aa).

Disordered stretches follow at residues 70 to 118 (SSEY…SLPR), 330 to 352 (LTAR…EVPC), 456 to 552 (TLPV…PILT), and 587 to 618 (IPSD…LKTL). Basic and acidic residues-rich tracts occupy residues 74–84 (KGTRRDSRGYE) and 333–343 (RTEEEPERHVP). Over residues 463 to 481 (TSRPQSPSSLSSKTTGLPL) the composition is skewed to low complexity. Polar residues-rich tracts occupy residues 485-516 (KPTS…NSLM) and 609-618 (SDPSHSLKTL).

This is an uncharacterized protein from Danio rerio (Zebrafish).